We begin with the raw amino-acid sequence, 99 residues long: Aspartyl/glutamyl-tRNA(Asn/Gln) amidotransferase subunit C (99 aa).

This sequence belongs to the GatC family. As to quaternary structure, heterotrimer of A, B and C subunits.

The enzyme catalyses L-glutamyl-tRNA(Gln) + L-glutamine + ATP + H2O = L-glutaminyl-tRNA(Gln) + L-glutamate + ADP + phosphate + H(+). It catalyses the reaction L-aspartyl-tRNA(Asn) + L-glutamine + ATP + H2O = L-asparaginyl-tRNA(Asn) + L-glutamate + ADP + phosphate + 2 H(+). Functionally, allows the formation of correctly charged Asn-tRNA(Asn) or Gln-tRNA(Gln) through the transamidation of misacylated Asp-tRNA(Asn) or Glu-tRNA(Gln) in organisms which lack either or both of asparaginyl-tRNA or glutaminyl-tRNA synthetases. The reaction takes place in the presence of glutamine and ATP through an activated phospho-Asp-tRNA(Asn) or phospho-Glu-tRNA(Gln). The sequence is that of Aspartyl/glutamyl-tRNA(Asn/Gln) amidotransferase subunit C from Corynebacterium glutamicum (strain R).